Consider the following 842-residue polypeptide: Leucine--tRNA ligase (842 aa).

A 'HIGH' region motif is present at residues 44–55; sequence PYPSANGLHVGH. The short motif at 619–623 is the 'KMSKS' region element; that stretch reads KMSKS. Residue lysine 622 coordinates ATP.

The protein belongs to the class-I aminoacyl-tRNA synthetase family.

Its subcellular location is the cytoplasm. The catalysed reaction is tRNA(Leu) + L-leucine + ATP = L-leucyl-tRNA(Leu) + AMP + diphosphate. The polypeptide is Leucine--tRNA ligase (Borrelia turicatae (strain 91E135)).